We begin with the raw amino-acid sequence, 321 residues long: Major immediate early protein (321 aa).

The segment at 86-139 (CSVCLETYSQQSNDTCPFLIPTTCDHGFCFKCVINLQSNAMNIPHSTVCCPLCN) adopts an RING-type zinc-finger fold. The segment at 228–249 (LIEENTRLNEQIQELQHQVRTL) is leucine-zipper.

It localises to the host nucleus. Its function is as follows. Plays some regulatory role in both viral DNA replication and transcriptional transactivation. This is Major immediate early protein (PE38) from Lepidoptera (butterflies and moths).